A 152-amino-acid chain; its full sequence is Small ribosomal subunit protein uS15 (152 aa).

Residues 1-20 (MNKRRANGSSHSTRPVRTGS) are disordered.

It belongs to the universal ribosomal protein uS15 family. In terms of assembly, part of the 30S ribosomal subunit.

This chain is Small ribosomal subunit protein uS15, found in Metallosphaera sedula (strain ATCC 51363 / DSM 5348 / JCM 9185 / NBRC 15509 / TH2).